The following is a 130-amino-acid chain: Transcription antitermination protein NusB (130 aa).

The protein belongs to the NusB family.

Involved in transcription antitermination. Required for transcription of ribosomal RNA (rRNA) genes. Binds specifically to the boxA antiterminator sequence of the ribosomal RNA (rrn) operons. This is Transcription antitermination protein NusB from Bacillus cereus (strain B4264).